The primary structure comprises 1004 residues: Polyhomeotic-like protein 1 (1004 aa).

Over residues 1–22 the composition is skewed to low complexity; that stretch reads METESEQNSNSTNGSSSSGGSS. Disordered regions lie at residues 1–24, 212–241, 261–355, 432–512, 556–589, and 636–672; these read METE…SSRP, NQQA…SSLS, SLNL…NLTR, QQQQ…QLGA, RGMP…PPTL, and TLAV…SPKV. The segment covering 212 to 228 has biased composition (polar residues); that stretch reads NQQASAQGPQMQGSTQK. The span at 279–303 shows a compositional bias: gly residues; that stretch reads MGPGGGGQAHGGLGQLPSSGMGGGS. Polar residues-rich tracts occupy residues 319-329 and 344-355; these read QTVTVSQGSQT and SGQQNVGMNLTR. The segment covering 432–447 has biased composition (low complexity); it reads QQQQQQQQPQATTLTA. The segment covering 448–458 has biased composition (pro residues); it reads PQPPQVPPTQQ. Residues 459–482 are compositionally biased toward low complexity; it reads VPPSQSQQQAQTLVVQPMLQSSPL. Pro residues predominate over residues 483–495; it reads SLPPDAAPKPPIP. The segment covering 566-583 has biased composition (low complexity); sequence QAHLASSPPSSQAPGALQ. A Phosphoserine modification is found at S645. K763 is covalently cross-linked (Glycyl lysine isopeptide (Lys-Gly) (interchain with G-Cter in SUMO2)). The segment at 791–825 adopts an FCS-type zinc-finger fold; the sequence is LDKKANLLKCEYCGKYAPAEQFRGSKRFCSMTCAK. Zn(2+) contacts are provided by C800, C803, C819, and C823. A disordered region spans residues 848–928; sequence ANYARVRRRG…APPTPELHGI (81 aa). At S898 the chain carries Phosphoserine. T922 carries the phosphothreonine modification. Positions 940–1004 constitute an SAM domain; sequence WSVEEVYEFI…CAKINVLKET (65 aa).

Homodimer. Component of a PRC1-like complex. Interacts with RNF2 and CBX7. Interacts with PHC2, PHC2 and BMI1.

The protein localises to the nucleus. Its function is as follows. Component of a Polycomb group (PcG) multiprotein PRC1-like complex, a complex class required to maintain the transcriptionally repressive state of many genes, including Hox genes, throughout development. PcG PRC1 complex acts via chromatin remodeling and modification of histones; it mediates monoubiquitination of histone H2A 'Lys-119', rendering chromatin heritably changed in its expressibility. Required for proper control of cellular levels of GMNN expression. The sequence is that of Polyhomeotic-like protein 1 (PHC1) from Homo sapiens (Human).